We begin with the raw amino-acid sequence, 97 residues long: Co-chaperonin GroES (97 aa).

Belongs to the GroES chaperonin family. Heptamer of 7 subunits arranged in a ring. Interacts with the chaperonin GroEL.

Its subcellular location is the cytoplasm. Functionally, together with the chaperonin GroEL, plays an essential role in assisting protein folding. The GroEL-GroES system forms a nano-cage that allows encapsulation of the non-native substrate proteins and provides a physical environment optimized to promote and accelerate protein folding. GroES binds to the apical surface of the GroEL ring, thereby capping the opening of the GroEL channel. In Stenotrophomonas maltophilia (Pseudomonas maltophilia), this protein is Co-chaperonin GroES.